The following is a 696-amino-acid chain: MARSHKLEDVRNIGIAAHIDAGKTTTTERILFYTGREHKIGEVHDGAATMDWMEQEQERGITITSAATTCEWAGKQINIIDTPGHVDFTIEVERSMRVLDGAVSVFCAVGGVQPQSETVWRQRNRYGVPSIVFVNKMDRTGANFYAVEEQIRTRLKGNPVPIQIPIGEEDNFLGVIDLVKMKAIVWDVDAAMGSNYHVEEIPANLLQKAQEYREKMIESISEVDGNEHLAEKYLEGEELSEDEIIAGIKAATIGMHIVPMTAGTSFKNKGVQTLLDAVVAYLPAPTECAPIKGTMMDDEDEEVIVPSTDSGEFASLAFKIMTDPFVGTLTFIRVYRGSLEAGSFVHNSTKDKKERIGRIVKMHAVKREDIKEIYAGEIGAVVGLKYTTTGDTLCSEADKVILERMTFPEPVISVAVEPKTKADQEKMGLALAKLAAEDPSFKVHTDEETGQTIISGMGELHLEILVDRMKREFKVEAEVGAPQVSYRETIRDTVNQEYKYAKQSGGRGAFGHVYLTIKPGDAGTGFVFHNEIKGGVIPKEYIPAVEKGCAETMSNGVLAGYPMEDIDITLYDGSYHEVDSNEMAFKLAASMGFKEGCRKARPAILEPLMKVEVEVPEDYMGDVIGDLNRRRGQVTNMGDRSGNKIVDAFVPLAEMFGYSTDLRSATQGRATYSMEFDHYEEVPKNVSEEIIKKRNG.

A tr-type G domain is found at 8–286 (EDVRNIGIAA…AVVAYLPAPT (279 aa)). Residues 17–24 (AHIDAGKT), 81–85 (DTPGH), and 135–138 (NKMD) contribute to the GTP site.

This sequence belongs to the TRAFAC class translation factor GTPase superfamily. Classic translation factor GTPase family. EF-G/EF-2 subfamily.

It is found in the cytoplasm. In terms of biological role, catalyzes the GTP-dependent ribosomal translocation step during translation elongation. During this step, the ribosome changes from the pre-translocational (PRE) to the post-translocational (POST) state as the newly formed A-site-bound peptidyl-tRNA and P-site-bound deacylated tRNA move to the P and E sites, respectively. Catalyzes the coordinated movement of the two tRNA molecules, the mRNA and conformational changes in the ribosome. In Sulfurimonas denitrificans (strain ATCC 33889 / DSM 1251) (Thiomicrospira denitrificans (strain ATCC 33889 / DSM 1251)), this protein is Elongation factor G.